The chain runs to 207 residues: dITP/XTP pyrophosphatase (207 aa).

11–16 (TGNPGK) contacts substrate. The Proton acceptor role is filled by Asp-72. Asp-72 contributes to the Mg(2+) binding site. Substrate is bound by residues Ser-73, 154-157 (FGYD), Lys-177, and 182-183 (HR).

The protein belongs to the HAM1 NTPase family. In terms of assembly, homodimer. It depends on Mg(2+) as a cofactor.

It carries out the reaction XTP + H2O = XMP + diphosphate + H(+). It catalyses the reaction dITP + H2O = dIMP + diphosphate + H(+). The enzyme catalyses ITP + H2O = IMP + diphosphate + H(+). Pyrophosphatase that catalyzes the hydrolysis of nucleoside triphosphates to their monophosphate derivatives, with a high preference for the non-canonical purine nucleotides XTP (xanthosine triphosphate), dITP (deoxyinosine triphosphate) and ITP. Seems to function as a house-cleaning enzyme that removes non-canonical purine nucleotides from the nucleotide pool, thus preventing their incorporation into DNA/RNA and avoiding chromosomal lesions. This is dITP/XTP pyrophosphatase from Thermus thermophilus (strain ATCC BAA-163 / DSM 7039 / HB27).